The primary structure comprises 350 residues: UDP-3-O-acylglucosamine N-acyltransferase (350 aa).

The Proton acceptor role is filled by His240.

It belongs to the transferase hexapeptide repeat family. LpxD subfamily. Homotrimer.

The catalysed reaction is a UDP-3-O-[(3R)-3-hydroxyacyl]-alpha-D-glucosamine + a (3R)-hydroxyacyl-[ACP] = a UDP-2-N,3-O-bis[(3R)-3-hydroxyacyl]-alpha-D-glucosamine + holo-[ACP] + H(+). It functions in the pathway bacterial outer membrane biogenesis; LPS lipid A biosynthesis. Its function is as follows. Catalyzes the N-acylation of UDP-3-O-acylglucosamine using 3-hydroxyacyl-ACP as the acyl donor. Is involved in the biosynthesis of lipid A, a phosphorylated glycolipid that anchors the lipopolysaccharide to the outer membrane of the cell. This is UDP-3-O-acylglucosamine N-acyltransferase from Methylobacillus flagellatus (strain ATCC 51484 / DSM 6875 / VKM B-1610 / KT).